The chain runs to 154 residues: Urease accessory protein UreE (154 aa).

It belongs to the UreE family.

It is found in the cytoplasm. In terms of biological role, involved in urease metallocenter assembly. Binds nickel. Probably functions as a nickel donor during metallocenter assembly. This is Urease accessory protein UreE from Escherichia coli O157:H7.